Reading from the N-terminus, the 432-residue chain is Adenylosuccinate synthetase (432 aa).

GTP contacts are provided by residues 13–19 and 41–43; these read GDEGKGK and GHT. Aspartate 14 acts as the Proton acceptor in catalysis. Aspartate 14 and glycine 41 together coordinate Mg(2+). IMP contacts are provided by residues 14–17, 39–42, threonine 130, arginine 144, glutamine 225, threonine 240, and arginine 304; these read DEGK and NAGH. Catalysis depends on histidine 42, which acts as the Proton donor. 300–306 provides a ligand contact to substrate; that stretch reads ATTGRRR. GTP contacts are provided by residues arginine 306, 332 to 334, and 415 to 417; these read KLD and STG.

It belongs to the adenylosuccinate synthetase family. As to quaternary structure, homodimer. It depends on Mg(2+) as a cofactor.

Its subcellular location is the cytoplasm. The catalysed reaction is IMP + L-aspartate + GTP = N(6)-(1,2-dicarboxyethyl)-AMP + GDP + phosphate + 2 H(+). The protein operates within purine metabolism; AMP biosynthesis via de novo pathway; AMP from IMP: step 1/2. In terms of biological role, plays an important role in the de novo pathway of purine nucleotide biosynthesis. Catalyzes the first committed step in the biosynthesis of AMP from IMP. This Erwinia tasmaniensis (strain DSM 17950 / CFBP 7177 / CIP 109463 / NCPPB 4357 / Et1/99) protein is Adenylosuccinate synthetase.